Reading from the N-terminus, the 417-residue chain is Secreted aspartic protease 4 (417 aa).

A signal peptide spans 1–18; the sequence is MFLQNILSVLAFALLIDA. The propeptide at 19–75 is activation peptide; sequence APVKRSTGFVTLDFNVKRSLVDPKDPTVEVKRSPLFLDIEPTEIPVDDTGRNDVGKR. Residues 89-403 enclose the Peptidase A1 domain; it reads YSADITIGSN…DLDDRKISMA (315 aa). D107 is an active-site residue. 107-109 contacts pepstatin A; that stretch reads DTG. Cysteines 122 and 134 form a disulfide. N-linked (GlcNAc...) asparagine glycosylation occurs at N137. 160–161 is a binding site for pepstatin A; sequence AD. D267 serves as a coordination point for Zn(2+). Residue D293 is part of the active site. Pepstatin A is bound at residue 293-297; it reads DSGTT. C331 and C369 form a disulfide bridge.

It belongs to the peptidase A1 family. In terms of assembly, monomer.

Its subcellular location is the secreted. The enzyme catalyses Preferential cleavage at the carboxyl of hydrophobic amino acids, but fails to cleave 15-Leu-|-Tyr-16, 16-Tyr-|-Leu-17 and 24-Phe-|-Phe-25 of insulin B chain. Activates trypsinogen, and degrades keratin.. With respect to regulation, activity is inhibited by squash aspartic peptidase inhibitor (SQAPI). Functionally, secreted aspartic peptidases (SAPs) are a group of ten acidic hydrolases considered as key virulence factors. These enzymes supply the fungus with nutrient amino acids as well as are able to degrade the selected host's proteins involved in the immune defense. Moreover, acts toward human hemoglobin though limited proteolysis to generate a variety of antimicrobial hemocidins, enabling to compete with the other microorganisms of the same physiological niche using the microbicidal peptides generated from the host protein. In terms of biological role, plays a key role in defense against host by cleaving histatin-5 (Hst 5), a peptide from human saliva that carries out fungicidal activity. The cleavage rate decreases in an order of SAP2 &gt; SAP9 &gt; SAP3 &gt; SAP7 &gt; SAP4 &gt; SAP1 &gt; SAP8. The first cleavage occurs between residues 'Lys-17' and 'His-18' of Hst 5, giving DSHAKRHHGYKRKFHEK and HHSHRGY peptides. Simultaneously, the DSHAKRHHGY and KRKFHEKHHSHRGY peptides are also formed. The polypeptide is Secreted aspartic protease 4 (Candida albicans (strain SC5314 / ATCC MYA-2876) (Yeast)).